We begin with the raw amino-acid sequence, 445 residues long: 8-amino-7-oxononanoate synthase (445 aa).

Arg40 serves as a coordination point for substrate. 131–132 (GY) is a binding site for pyridoxal 5'-phosphate. His156 provides a ligand contact to substrate. Residues Ser202, His230, and Thr258 each coordinate pyridoxal 5'-phosphate. Lys261 carries the post-translational modification N6-(pyridoxal phosphate)lysine. Thr377 is a binding site for substrate. The segment at 408 to 445 (ASEGQTRRDAEQPPRSLRSLPPEGAAASLGAARRETAA) is disordered.

The protein belongs to the class-II pyridoxal-phosphate-dependent aminotransferase family. BioF subfamily. Homodimer. Requires pyridoxal 5'-phosphate as cofactor.

The enzyme catalyses 6-carboxyhexanoyl-[ACP] + L-alanine + H(+) = (8S)-8-amino-7-oxononanoate + holo-[ACP] + CO2. It participates in cofactor biosynthesis; biotin biosynthesis. Catalyzes the decarboxylative condensation of pimeloyl-[acyl-carrier protein] and L-alanine to produce 8-amino-7-oxononanoate (AON), [acyl-carrier protein], and carbon dioxide. The chain is 8-amino-7-oxononanoate synthase from Burkholderia ambifaria (strain MC40-6).